Here is a 455-residue protein sequence, read N- to C-terminus: Venom prothrombin activator notecarin-D1 (455 aa).

The N-terminal stretch at 1–20 is a signal peptide; the sequence is MAPQLLLCLILTFLWSLPEA. Positions 21–40 are excised as a propeptide; sequence ESNVFLKSKVANRFLQRTKR. Positions 41–86 constitute a Gla domain; sequence SNSLFEEIRPGNIERECIEEKCSKEEAREVFEDNEKTETFWNVYVD. A 4-carboxyglutamate mark is found at Glu-46, Glu-47, Glu-54, Glu-56, Glu-59, Glu-60, Glu-65, Glu-66, Glu-69, Glu-72, and Glu-75. Residues Cys-57 and Cys-62 are joined by a disulfide bond. The EGF-like 1; calcium-binding domain maps to 86-122; the sequence is DGDQCSSNPCHYRGTCKDGIGSYTCTCLPNYEGKNCE. 11 cysteine pairs are disulfide-bonded: Cys-90–Cys-101, Cys-95–Cys-110, Cys-112–Cys-121, Cys-129–Cys-140, Cys-136–Cys-149, Cys-151–Cys-164, Cys-172–Cys-328, Cys-216–Cys-221, Cys-236–Cys-252, Cys-376–Cys-390, and Cys-401–Cys-429. Residue Ser-92 is glycosylated (O-linked (Hex...) serine). In terms of domain architecture, EGF-like 2 spans 129–164; that stretch reads CRVDNGNCWHFCKRVQSETQCSCAESYRLGVDGHSC. The propeptide at 182-209 is activation peptide; that stretch reads REASLPDFVQSQKATLLKKSDNPSPDIR. The Peptidase S1 domain maps to 210–453; it reads IVNGMDCKLG…FIPWIKKIMS (244 aa). His-251 (charge relay system) is an active-site residue. Asn-254 is a glycosylation site (N-linked (GlcNAc...) asparagine). Asp-308 serves as the catalytic Charge relay system. Ser-405 functions as the Charge relay system in the catalytic mechanism.

Belongs to the peptidase S1 family. Snake venom subfamily. As to quaternary structure, heterodimer of a light chain and a heavy chain; disulfide-linked. Gamma-carboxyglutamate residues are formed by vitamin K dependent carboxylation. These residues are essential for the binding of calcium. In terms of tissue distribution, expressed by the venom gland.

Its subcellular location is the secreted. The enzyme catalyses Selective cleavage of Arg-|-Thr and then Arg-|-Ile bonds in prothrombin to form thrombin.. Its function is as follows. Snake prothrombin activator that attacks the hemostatic system of prey. This protein is functionally similar to blood coagulation factor Xa. The chain is Venom prothrombin activator notecarin-D1 from Notechis scutatus scutatus (Mainland tiger snake).